The chain runs to 1149 residues: MTAKLLYELVHEAARAHGDKRAVAFDSSIAARVSLTYDELIFMSDELTAQLRVSVQNHEGAIGLFCHPDVLLPVWIIGILQFPAAYLPLDPASPPQCSLRMINNCRLSFCLIQNELLHSAFSILISVEVCATFCSHRLTLIKIKSEQKENSQANDAPFSSAVTKNIQQGEPLAYILHTSGTTGLPKIVKVPHRCIVPNIIHLRSVFKMTPEDVVFLSSPLTFDPSVVEVFLALSSGACLLIVPSAVKKMPRRLAHVLFKRNTTTVLQATPTLVRRFGKVVLQEEVLSADSSLRILAFGGEPCPSLNLVKSWRQEGNRTHIYNLYGTTEVSCWASWYKVPDEHLCLEDITDAPVPLGEPMLDTVMEVRDETGHLVTEGEGQLFIGGQNRVCLLDDEETVVKGTMRATGDWVQVQNSNLYFLGRKDRLVKRFGQRVHLDALQQMIESFSGVEACAVNLSKDDRLLAFIVLTSGHAGAPLSSEIHHDKHLTQPSEISVSVSPKASPPSLRVTEGEIRHQLSKRLSSHSIPDMMVFIPALPLTSHGKIAIDELMKTCETQRQDKNKQAPQKDTASVRLKLQNLWKECLGLQDDVVVEENAHFMFSGGDSLQALRLFDDITVAMGTTSVGLLEVILDGSFSDLLSHIMTETHDDAVLPSKKRTADYSDSEASGKRQHKEMTTSSDTESPFVVPSLRRTMGFVVVRRAAEVFKWGFQKIPQGIFSDAPDKNYVTNNSVGNDTGLISNPSLELSKSSAVTNMADHLQAQEETLLASESPSSHGGVREDSTGVLPLALRVLWRSDTGRCVDASPMLLVAPDRTTVFIGSHSHRLQALDLSRGEVIWERILGDRLESSAAISSCGGLVAIGCYDRQMYFLDVSCGDTVWTFETGDVVKSSPTVDPKTGLVFAGSHDGHVYALNPLTKTCTWQHYCGGGAVFSSPCVHLSPRQLYCSSLGGHLHCLNPDSGKVLWKYSSSAPFFSSPHCSDSSVFIGSVNGHIIGISHSGNTLWDFSTDGPVFSSPCISSLTLLTNQPPSTTPSSSVTTSPNHIVTCGSHDGHVYCLNAQNGSLLWQFQTTGKVFSTPFVFSGALWGLRTLAAVCSTDGKVWVLDGETGIQKATLSLPGELFSSPVIWGSKLVVGCRNDYVYCLELTTQ.

ATP-binding positions include 178-186 (TSGTTGLPK), aspartate 408, arginine 422, and lysine 543. Residues 570 to 646 (ASVRLKLQNL…DLLSHIMTET (77 aa)) enclose the Carrier domain. The residue at position 605 (serine 605) is an O-(pantetheine 4'-phosphoryl)serine. The segment at 653–683 (PSKKRTADYSDSEASGKRQHKEMTTSSDTES) is disordered.

Belongs to the ATP-dependent AMP-binding enzyme family.

Its function is as follows. Covalently binds beta-alanine in an ATP-dependent manner to form a thioester bond with its phosphopantetheine group and transfers it to an, as yet, unknown acceptor. May be required for a post-translational protein modification or for post-transcriptional modification of an RNA. This is Beta-alanine-activating enzyme (aasdh) from Danio rerio (Zebrafish).